We begin with the raw amino-acid sequence, 497 residues long: L-asparagine permease (497 aa).

12 helical membrane-spanning segments follow: residues 34 to 54 (QVQM…GAGA), 58 to 78 (MAGP…FFIL), 109 to 129 (VAGW…ITAV), 146 to 166 (VFAL…VKWF), 171 to 191 (FWFA…GTIF), 219 to 239 (LLPA…IELV), 264 to 284 (IGLF…WNAY), 298 to 318 (LGVP…ALSS), 353 to 373 (YAGI…NYLV), 378 to 398 (FEIV…FIMV), 422 to 442 (APFT…LMAF), and 448 to 468 (TYTI…WFGV).

The protein belongs to the amino acid-polyamine-organocation (APC) superfamily. Amino acid transporter (AAT) (TC 2.A.3.1) family.

It localises to the cell inner membrane. This chain is L-asparagine permease (ansP), found in Salmonella typhimurium (strain LT2 / SGSC1412 / ATCC 700720).